A 448-amino-acid chain; its full sequence is N-succinylarginine dihydrolase (448 aa).

Substrate contacts are provided by residues G19 to S28, N110, and H137 to R138. The active site involves E174. R214 is a binding site for substrate. The active site involves H250. Substrate-binding residues include D252 and N365. C371 (nucleophile) is an active-site residue.

The protein belongs to the succinylarginine dihydrolase family. As to quaternary structure, homodimer.

The catalysed reaction is N(2)-succinyl-L-arginine + 2 H2O + 2 H(+) = N(2)-succinyl-L-ornithine + 2 NH4(+) + CO2. The protein operates within amino-acid degradation; L-arginine degradation via AST pathway; L-glutamate and succinate from L-arginine: step 2/5. Catalyzes the hydrolysis of N(2)-succinylarginine into N(2)-succinylornithine, ammonia and CO(2). This is N-succinylarginine dihydrolase from Pseudomonas syringae pv. syringae (strain B728a).